The chain runs to 796 residues: Exocyst complex component 3 (796 aa).

The stretch at Pro87–Leu174 forms a coiled coil.

The protein belongs to the SEC6 family. The exocyst complex is composed of sec-3/exoc1, sec-5/exoc2, sec-6/exoc3, sec-8/exoc4, sec-10/exoc5, sec-15/exoc6, exo-70/exoc7 and exo-84/exoc8.

Its function is as follows. Component of the exocyst complex involved in the docking of exocytic vesicles with fusion sites on the plasma membrane. The sequence is that of Exocyst complex component 3 (sec-6) from Caenorhabditis elegans.